Here is a 236-residue protein sequence, read N- to C-terminus: Eukaryotic translation initiation factor 3 subunit J (236 aa).

The interval 20–88 (ANNINKWEGE…AEEEKRLANL (69 aa)) is disordered. The segment covering 28–46 (GEDDDEDVKESWEDEEEKK) has biased composition (acidic residues). Basic and acidic residues-rich tracts occupy residues 47–58 (DEEKPTKTEVPV) and 68–88 (AKLE…LANL).

Belongs to the eIF-3 subunit J family. Component of the eukaryotic translation initiation factor 3 (eIF-3) complex. The eIF-3 complex interacts with pix.

Its subcellular location is the cytoplasm. Its function is as follows. Component of the eukaryotic translation initiation factor 3 (eIF-3) complex, which is involved in protein synthesis of a specialized repertoire of mRNAs and, together with other initiation factors, stimulates binding of mRNA and methionyl-tRNAi to the 40S ribosome. The eIF-3 complex specifically targets and initiates translation of a subset of mRNAs involved in cell proliferation. The polypeptide is Eukaryotic translation initiation factor 3 subunit J (Drosophila willistoni (Fruit fly)).